A 109-amino-acid polypeptide reads, in one-letter code: Probable WRKY transcription factor 43 (109 aa).

A DNA-binding region (WRKY) is located at residues 24 to 89 (SDADILDDGY…YEGIHNHPCE (66 aa)).

Belongs to the WRKY group II-c family.

Its subcellular location is the nucleus. Its function is as follows. Transcription factor. Interacts specifically with the W box (5'-(T)TGAC[CT]-3'), a frequently occurring elicitor-responsive cis-acting element. The polypeptide is Probable WRKY transcription factor 43 (WRKY43) (Arabidopsis thaliana (Mouse-ear cress)).